A 458-amino-acid polypeptide reads, in one-letter code: NADH-quinone oxidoreductase subunit N (458 aa).

The next 13 helical transmembrane spans lie at 3-23 (QYLF…LLFL), 29-49 (FGLI…TCTS), 64-84 (QNVK…AIAV), 92-112 (FSVL…SSTL), 147-167 (TLLG…IFVV), 188-208 (ILLF…HAWI), 222-242 (FFAV…ISNL), 265-285 (NILF…AFGQ), 291-311 (FIGF…SNSA), 320-340 (IAYA…VLML), 358-378 (VALA…FIGF), 394-414 (IPTA…YARI), and 437-457 (LLTS…VLLI).

This sequence belongs to the complex I subunit 2 family. NDH-1 is composed of 14 different subunits. Subunits NuoA, H, J, K, L, M, N constitute the membrane sector of the complex.

It localises to the cell inner membrane. The catalysed reaction is a quinone + NADH + 5 H(+)(in) = a quinol + NAD(+) + 4 H(+)(out). Its function is as follows. NDH-1 shuttles electrons from NADH, via FMN and iron-sulfur (Fe-S) centers, to quinones in the respiratory chain. The immediate electron acceptor for the enzyme in this species is believed to be ubiquinone. Couples the redox reaction to proton translocation (for every two electrons transferred, four hydrogen ions are translocated across the cytoplasmic membrane), and thus conserves the redox energy in a proton gradient. This Neorickettsia risticii (strain Illinois) protein is NADH-quinone oxidoreductase subunit N.